A 235-amino-acid chain; its full sequence is UPF0173 metal-dependent hydrolase mll0680 (235 aa).

Belongs to the UPF0173 family.

The protein is UPF0173 metal-dependent hydrolase mll0680 of Mesorhizobium japonicum (strain LMG 29417 / CECT 9101 / MAFF 303099) (Mesorhizobium loti (strain MAFF 303099)).